A 141-amino-acid polypeptide reads, in one-letter code: VLSSHDKSNVKGLFGKVGGHLEEYCAETLARMFAAYPQTKTYFPHFDLQPGSAQVKAHGKKVAGALAEAANHIDDIASALSKLSDLHQHKLRVDPVNFKLLAHCFLVVMAIHHPSLLTPEVHASLDKFLCAVGTVLTAKYR.

Residues 1 to 141 form the Globin domain; the sequence is VLSSHDKSNV…VGTVLTAKYR (141 aa). Residue His-58 coordinates O2. Heme b is bound at residue His-87.

This sequence belongs to the globin family. In terms of assembly, heterotetramer of two alpha chains and two beta chains. As to expression, red blood cells.

Functionally, involved in oxygen transport from the lung to the various peripheral tissues. In Phoenicopterus ruber (American flamingo), this protein is Hemoglobin subunit alpha-A (HBAA).